We begin with the raw amino-acid sequence, 106 residues long: MSQESDHGSGDGLALQEAQPKVKRPPLYKVMLLNDDFTPMEFVVHVLMLFFGMNEEKATQVMLHVHTRGVGVCGVFSKDVAETKVQQVNAHARQNQHPLLCTMEEA.

This sequence belongs to the ClpS family. As to quaternary structure, binds to the N-terminal domain of the chaperone ClpA.

Involved in the modulation of the specificity of the ClpAP-mediated ATP-dependent protein degradation. In Methylococcus capsulatus (strain ATCC 33009 / NCIMB 11132 / Bath), this protein is ATP-dependent Clp protease adapter protein ClpS.